Here is a 234-residue protein sequence, read N- to C-terminus: MSIIKLVLMRHGSSIWNDQDRFTGWTDIDLSEKGKNEVKYAGKMLKSFGYSFNFAYTSLLKRAIHSLWVILKEINQSWIPVEKSWRLNERHYGALQGFSKYEIEKKYGKNQLNEWRRGFSISPPKINEKDNYFILNDKRYLNLKTKKLLPFSESLKSTIDRIMPYWDGNIFPRLQNKEKIIIVAHGNSIRAIIKILCNLNEKEIIKINIPTGIPLIYEFDYNMVFKKKYFLFDR.

Residues 10–17 (RHGSSIWN), 23–24 (TG), Arg-62, 89–92 (ERHY), Lys-100, 116–117 (RR), and 186–187 (GN) each bind substrate. The active-site Tele-phosphohistidine intermediate is the His-11. Glu-89 functions as the Proton donor/acceptor in the catalytic mechanism.

Belongs to the phosphoglycerate mutase family. BPG-dependent PGAM subfamily. In terms of assembly, homodimer.

It catalyses the reaction (2R)-2-phosphoglycerate = (2R)-3-phosphoglycerate. It functions in the pathway carbohydrate degradation; glycolysis; pyruvate from D-glyceraldehyde 3-phosphate: step 3/5. Catalyzes the interconversion of 2-phosphoglycerate and 3-phosphoglycerate. The protein is 2,3-bisphosphoglycerate-dependent phosphoglycerate mutase of Wigglesworthia glossinidia brevipalpis.